The sequence spans 129 residues: Ribosome-binding factor A (129 aa).

It belongs to the RbfA family. Monomer. Binds 30S ribosomal subunits, but not 50S ribosomal subunits or 70S ribosomes.

The protein resides in the cytoplasm. One of several proteins that assist in the late maturation steps of the functional core of the 30S ribosomal subunit. Associates with free 30S ribosomal subunits (but not with 30S subunits that are part of 70S ribosomes or polysomes). Required for efficient processing of 16S rRNA. May interact with the 5'-terminal helix region of 16S rRNA. This is Ribosome-binding factor A from Pseudomonas aeruginosa (strain UCBPP-PA14).